The following is a 319-amino-acid chain: uncharacterized protein (319 aa).

This is an uncharacterized protein from Bacillus subtilis (strain 168).